A 397-amino-acid polypeptide reads, in one-letter code: Enoyl-[acyl-carrier-protein] reductase [NADH] (397 aa).

Residues 48–53, 74–75, 111–112, and 139–140 contribute to the NAD(+) site; these read GASTGY, LE, DA, and LA. Position 225 (Tyr225) interacts with substrate. The active-site Proton donor is Tyr235. NAD(+)-binding positions include Lys244 and 273 to 275; that span reads VVT.

It belongs to the TER reductase family. As to quaternary structure, monomer.

The catalysed reaction is a 2,3-saturated acyl-[ACP] + NAD(+) = a (2E)-enoyl-[ACP] + NADH + H(+). It participates in lipid metabolism; fatty acid biosynthesis. In terms of biological role, involved in the final reduction of the elongation cycle of fatty acid synthesis (FAS II). Catalyzes the reduction of a carbon-carbon double bond in an enoyl moiety that is covalently linked to an acyl carrier protein (ACP). The protein is Enoyl-[acyl-carrier-protein] reductase [NADH] of Tolumonas auensis (strain DSM 9187 / NBRC 110442 / TA 4).